The chain runs to 588 residues: Aspartate--tRNA ligase (588 aa).

Glu177 lines the L-aspartate pocket. Residues 201–204 (QLFK) are aspartate. Arg223 lines the L-aspartate pocket. ATP contacts are provided by residues 223–225 (RDE) and Gln232. His451 is an L-aspartate binding site. Glu485 provides a ligand contact to ATP. Arg492 contributes to the L-aspartate binding site. 537–540 (GLDR) serves as a coordination point for ATP.

The protein belongs to the class-II aminoacyl-tRNA synthetase family. Type 1 subfamily. As to quaternary structure, homodimer.

The protein resides in the cytoplasm. The catalysed reaction is tRNA(Asp) + L-aspartate + ATP = L-aspartyl-tRNA(Asp) + AMP + diphosphate. Catalyzes the attachment of L-aspartate to tRNA(Asp) in a two-step reaction: L-aspartate is first activated by ATP to form Asp-AMP and then transferred to the acceptor end of tRNA(Asp). The polypeptide is Aspartate--tRNA ligase (Staphylococcus epidermidis (strain ATCC 35984 / DSM 28319 / BCRC 17069 / CCUG 31568 / BM 3577 / RP62A)).